Consider the following 494-residue polypeptide: UPF0371 protein SPH_0451 (494 aa).

Belongs to the UPF0371 family.

This Streptococcus pneumoniae (strain Hungary19A-6) protein is UPF0371 protein SPH_0451.